Consider the following 489-residue polypeptide: Glutamyl-tRNA(Gln) amidotransferase subunit A (489 aa).

Residues lysine 80 and serine 160 each act as charge relay system in the active site. The active-site Acyl-ester intermediate is the serine 184.

This sequence belongs to the amidase family. GatA subfamily. In terms of assembly, heterotrimer of A, B and C subunits.

The catalysed reaction is L-glutamyl-tRNA(Gln) + L-glutamine + ATP + H2O = L-glutaminyl-tRNA(Gln) + L-glutamate + ADP + phosphate + H(+). In terms of biological role, allows the formation of correctly charged Gln-tRNA(Gln) through the transamidation of misacylated Glu-tRNA(Gln) in organisms which lack glutaminyl-tRNA synthetase. The reaction takes place in the presence of glutamine and ATP through an activated gamma-phospho-Glu-tRNA(Gln). The protein is Glutamyl-tRNA(Gln) amidotransferase subunit A of Wolbachia sp. subsp. Brugia malayi (strain TRS).